Here is a 690-residue protein sequence, read N- to C-terminus: MAPPRHARLVAATIAVLLCHLPRSAASPSWSDAAVSPPSPSPQLCPMMQQRSVLPPRVSELPASPFTAKAAFVRYWNRKVHSNRPHPAFFFAKLSPLSAPDAAAFSTLAAAGQLGSRIRAFCAAASLLCPTTPGSSWSKSSSDGDGAAAAAAPAGGGGGGGGGGDGGAAPFKNYENGNFSSYGNSGGGGADQFAVYSSGQSNGGGGGGGGVDSFRRYGKGSQGRNDSFTSYEAGGNVGTSSFTSYNGDATGGAGGFSSYAGDANTVAVSFGNYDHTGNGRSREFSEYTQDANTGEESFAAYGKTANGAAESFRTYGNHSNSIATGFDNYGDRANGAADAFSSYGASGNTPENTFKSYASGSNAGVDDFKGYRDDANVGNDSFTSYASNANGAAAGFESYGKSVNPGSVTFKGYGLGSNPNHRIGFARYSGDNTTFKAYSNDGVEFKEYQNMSKMEVSKIEAAARRPPLRWSPEPGKFFRERDLVAGNRMPMPDIADRTPPRAFLPRDIAAKIPFDAAAVSALFGAAPGTAMRQVVSSTVAECARPPSRGETKRCATSAEDVVDFAVEMLGDNVVARATESTAGGGGDVRLGRVAGVPAGGNVTRSVSCHQSLFPYLVYYCHSVPTVRVYEADILAVDSNQKINHGVAICHLDTSDWSPNHGAFIALGGKPGEMEVCHWIFQGDMTWTVAN.

An N-terminal signal peptide occupies residues 1-26 (MAPPRHARLVAATIAVLLCHLPRSAA). Residues 134-163 (GSSWSKSSSDGDGAAAAAAPAGGGGGGGGG) form a disordered region. Low complexity predominate over residues 135-153 (SSWSKSSSDGDGAAAAAAP). Over residues 154–163 (AGGGGGGGGG) the composition is skewed to gly residues. N178 is a glycosylation site (N-linked (GlcNAc...) asparagine). Over residues 201 to 211 (SNGGGGGGGGV) the composition is skewed to gly residues. Residues 201–232 (SNGGGGGGGGVDSFRRYGKGSQGRNDSFTSYE) form a disordered region. N-linked (GlcNAc...) asparagine glycosylation is found at N225, N317, N379, N432, N450, and N601. In terms of domain architecture, BURP spans 477–689 (FFRERDLVAG…FQGDMTWTVA (213 aa)).

Expressed in panicles.

This Oryza sativa subsp. japonica (Rice) protein is BURP domain-containing protein 14 (BURP14).